A 271-amino-acid chain; its full sequence is MNDIDREEPCAAAAVPESMAAHVMGYKWARDKVGQSGCAVYRLHSKSGGSDLFLKHGKDAFADDVTDEMVRLRWLAGHISVPSVVSFVRTPNQAWLLTTAIHGKTAYQVLKSDFGARLVVVDALAAFMRRLHAIPVSECSVQQWTTHAGLPERGSIEAGVVDVDDFDKEREGWTAEQVWEAMHRLLPLAPDPVVTHGDFSLDNLLIVEGKVVGCIDVGRAGIADRYQDLAVLWNCLEEFEPSLQERLVAQYGIADPDRRKLQFHLLLDELF.

Catalysis depends on Asp198, which acts as the Proton acceptor.

Belongs to the aminoglycoside phosphotransferase family.

It catalyses the reaction kanamycin A + ATP = kanamycin 3'-phosphate + ADP + H(+). Its function is as follows. Resistance to kanamycin and structurally-related aminoglycosides, including amikacin. This chain is Aminoglycoside 3'-phosphotransferase (aphA), found in Escherichia coli.